The sequence spans 394 residues: Probable nucleoredoxin 2 (394 aa).

Thioredoxin domains follow at residues G15–E176 and S180–D327.

The protein belongs to the nucleoredoxin family.

It carries out the reaction [protein]-dithiol + NAD(+) = [protein]-disulfide + NADH + H(+). The catalysed reaction is [protein]-dithiol + NADP(+) = [protein]-disulfide + NADPH + H(+). Functionally, probable thiol-disulfide oxidoreductase that may participate in various redox reactions. In Oryza sativa subsp. japonica (Rice), this protein is Probable nucleoredoxin 2.